A 588-amino-acid chain; its full sequence is Sulfite reductase [NADPH] hemoprotein beta-component (588 aa).

The [4Fe-4S] cluster site is built by Cys-443, Cys-449, Cys-488, and Cys-492. Cys-492 contributes to the siroheme binding site.

It belongs to the nitrite and sulfite reductase 4Fe-4S domain family. Alpha(8)-beta(8). The alpha component is a flavoprotein, the beta component is a hemoprotein. It depends on siroheme as a cofactor. The cofactor is [4Fe-4S] cluster.

The enzyme catalyses hydrogen sulfide + 3 NADP(+) + 3 H2O = sulfite + 3 NADPH + 4 H(+). The protein operates within sulfur metabolism; hydrogen sulfide biosynthesis; hydrogen sulfide from sulfite (NADPH route): step 1/1. Its function is as follows. Component of the sulfite reductase complex that catalyzes the 6-electron reduction of sulfite to sulfide. This is one of several activities required for the biosynthesis of L-cysteine from sulfate. This chain is Sulfite reductase [NADPH] hemoprotein beta-component, found in Actinobacillus succinogenes (strain ATCC 55618 / DSM 22257 / CCUG 43843 / 130Z).